A 519-amino-acid chain; its full sequence is Amphoterin-induced protein 2 (519 aa).

Positions 1-38 (MSLRFHTLPTLPRAVKPGCRELLCLLVIAVMVSPSASG) are cleaved as a signal peptide. Positions 39–67 (MCPTACICATDIVSCTNKNLSKVPGNLFR) constitute an LRRNT domain. The Extracellular segment spans residues 39–397 (MCPTACICAT…RSHAHEAFNT (359 aa)). 2 disulfides stabilise this stretch: C40–C46 and C44–C53. N57 carries an N-linked (GlcNAc...) asparagine glycan. LRR repeat units follow at residues 68 to 89 (LIKR…WIPV), 93 to 114 (KLST…SFST), 117 to 138 (NLKC…TFQE), 141 to 162 (ALEV…AFGG), 165 to 186 (HLQK…LYTG), and 192 to 213 (DLTF…HINL). N103 carries an N-linked (GlcNAc...) asparagine glycan. One can recognise an LRRCT domain in the interval 227–283 (NPFVCDCSLYSLLIFWYRRHFSSVMDFKNDYTCRLWSDSRHSHQLQLLQESFLNCSY). Intrachain disulfides connect C231–C259 and C233–C281. N280, N287, N344, N372, N380, N383, and N387 each carry an N-linked (GlcNAc...) asparagine glycan. In terms of domain architecture, Ig-like C2-type spans 288–378 (GSFHALGFIH…RLLNETVDIM (91 aa)). C309 and C362 are joined by a disulfide. A helical transmembrane segment spans residues 398 to 418 (AFTTLAACVASIVLVLLYLYL). The Cytoplasmic portion of the chain corresponds to 419–519 (TPCPCKCKAK…FSDTPFVAST (101 aa)). Residues 498-519 (RAKSDSDSVNSVFSDTPFVAST) form a disordered region.

The protein belongs to the immunoglobulin superfamily. AMIGO family. In terms of assembly, binds itself as well as AMIGO1 and AMIGO3. Highest level in cerebellum, retina, liver, and lung. Lower levels in cerebrum, kidney, small intestine, spleen and testis.

The protein localises to the cell membrane. The protein resides in the nucleus. Its function is as follows. Required for depolarization-dependent survival of cultured cerebellar granule neurons. May mediate homophilic as well as heterophilic cell-cell interaction with AMIGO1 or AMIGO3. May contribute to signal transduction through its intracellular domain. This chain is Amphoterin-induced protein 2, found in Mus musculus (Mouse).